The primary structure comprises 354 residues: Protein C42 (354 aa).

The Nuclear localization signal motif lies at 349–352 (KRKK).

The protein belongs to the baculoviridae C42 protein family.

Its subcellular location is the host nucleus. The chain is Protein C42 from Orgyia pseudotsugata (Douglas-fir tussock moth).